The chain runs to 669 residues: Acetolactate synthase, mitochondrial (669 aa).

A mitochondrion-targeting transit peptide spans 1 to 140; that stretch reads MTVLAPLRRL…PRHEQAAGHA (140 aa). E134 provides a ligand contact to thiamine diphosphate. Residues R236, 351–372, and 403–422 contribute to the FAD site; these read HGSGYANMAMQEADLILALGVR and DISPKNIGKVVQPTEAIEGD. A thiamine pyrophosphate binding region spans residues 497-577; it reads AHQMWAATFY…VKILILNNEE (81 aa). Mg(2+)-binding residues include D548 and N575.

This sequence belongs to the TPP enzyme family. Mg(2+) is required as a cofactor. The cofactor is thiamine diphosphate.

The protein localises to the mitochondrion. The catalysed reaction is 2 pyruvate + H(+) = (2S)-2-acetolactate + CO2. The protein operates within amino-acid biosynthesis; L-isoleucine biosynthesis; L-isoleucine from 2-oxobutanoate: step 1/4. Its pathway is amino-acid biosynthesis; L-valine biosynthesis; L-valine from pyruvate: step 1/4. In Schizosaccharomyces pombe (strain 972 / ATCC 24843) (Fission yeast), this protein is Acetolactate synthase, mitochondrial (ilv1).